We begin with the raw amino-acid sequence, 277 residues long: Bis(5'-nucleosyl)-tetraphosphatase, symmetrical (277 aa).

This sequence belongs to the Ap4A hydrolase family.

The catalysed reaction is P(1),P(4)-bis(5'-adenosyl) tetraphosphate + H2O = 2 ADP + 2 H(+). In terms of biological role, hydrolyzes diadenosine 5',5'''-P1,P4-tetraphosphate to yield ADP. The chain is Bis(5'-nucleosyl)-tetraphosphatase, symmetrical from Chromobacterium violaceum (strain ATCC 12472 / DSM 30191 / JCM 1249 / CCUG 213 / NBRC 12614 / NCIMB 9131 / NCTC 9757 / MK).